Consider the following 543-residue polypeptide: Neurofilament light polypeptide (543 aa).

Serine 2 carries the N-acetylserine modification. The head stretch occupies residues 2-92 (SSFSYEPYYS…LKSIRTQEKA (91 aa)). The O-linked (GlcNAc) threonine glycan is linked to threonine 21. Arginine 23 is modified (asymmetric dimethylarginine; alternate). Arginine 23 bears the Omega-N-methylarginine; alternate mark. Residue serine 27 is glycosylated (O-linked (GlcNAc) serine). Residue arginine 30 is modified to Omega-N-methylarginine. Tyrosine 43 is subject to Phosphotyrosine. Phosphoserine occurs at positions 56, 67, and 103. The 311-residue stretch at 90–400 (EKAQLQDLND…KLLEGEETRL (311 aa)) folds into the IF rod domain. Residues 93 to 124 (QLQDLNDRFASFIERVHELEQQNKVLEAELLV) are coil 1A. Residues 125 to 137 (LRQKHSEPSRFRA) are linker 1. The coil 1B stretch occupies residues 138-234 (LYEQEIRDLR…KVHEEEIAEL (97 aa)). The tract at residues 235-252 (QAQIQYAQISVEMDVTKP) is linker 12. The segment at 253–271 (DLSAALKDIRAQYEKLAAK) is coil 2A. Positions 272-280 (NMQNAEEWF) are linker 2. Residues 281–396 (KSRFTVLTES…AAYRKLLEGE (116 aa)) form a coil 2B region. The epitope; recognized by IF-specific monoclonal antibody stretch occupies residues 381–391 (ALDIEIAAYRK). The interval 397-443 (ETRLSFTSVGSITSGYSQSSQVFGRSAYGGLQTSSYLMSTRSFPSYY) is tail, subdomain A. The interval 397–543 (ETRLSFTSVG…GEEQAAKKKD (147 aa)) is tail. Residues 444-543 (TSHVQEEQIE…GEEQAAKKKD (100 aa)) form a tail, subdomain B (acidic) region. The disordered stretch occupies residues 462–543 (KAEEAKDEPP…GEEQAAKKKD (82 aa)). Over residues 471-525 (PSEGEAEEEEKDKEEAEEEEAAEEEEAAKEESEEAKEEEEGGEGEEGEETKEAEE) the composition is skewed to acidic residues. Phosphoserine is present on residues serine 472 and serine 502. Residue threonine 520 is modified to Phosphothreonine. Residues 526 to 543 (EEKKVEGAGEEQAAKKKD) show a composition bias toward basic and acidic residues.

Belongs to the intermediate filament family. As to quaternary structure, forms homodimers (in vitro). Forms heterodimers with NEFH or NEFM; which can further hetero-oligomerize (in vitro). Forms heterodimers with INA (in vitro). Interacts with ARHGEF28. Interacts with TRIM2. In terms of processing, O-glycosylated. Phosphorylated in the head and rod regions by the PKC kinase PKN1, leading to the inhibition of polymerization. Post-translationally, ubiquitinated in the presence of TRIM2 and UBE2D1.

It is found in the cell projection. It localises to the axon. The protein localises to the cytoplasm. The protein resides in the cytoskeleton. Functionally, neurofilaments usually contain three intermediate filament proteins: NEFL, NEFM, and NEFH which are involved in the maintenance of neuronal caliber. May additionally cooperate with the neuronal intermediate filament proteins PRPH and INA to form neuronal filamentous networks. In Homo sapiens (Human), this protein is Neurofilament light polypeptide (NEFL).